Here is a 1470-residue protein sequence, read N- to C-terminus: Collagen alpha-1(XVII) chain (1470 aa).

Disordered regions lie at residues 1 to 155, 167 to 193, and 422 to 452; these read MDVT…PSTR, KGSR…GTVE, and SAEN…GGAS. The Cytoplasmic segment spans residues 1-476; that stretch reads MDVTKKSKRD…CGSCCSWWKW (476 aa). The nonhelical region (NC16) stretch occupies residues 1-573; sequence MDVTKKSKRD…MTEQENGNLR (573 aa). A compositionally biased stretch (basic and acidic residues) spans 9 to 19; it reads RDGTEVTERIV. Residues 60–74 are compositionally biased toward low complexity; the sequence is GSSGYINSSGSIRGN. Polar residues-rich tracts occupy residues 75–96, 111–120, and 170–184; these read ASTS…SPGS, EGSSSGNSSP, and RSAS…SNTL. The necessary for interaction with DST and for the recruitment of DST to hemidesmosome stretch occupies residues 146–231; sequence RLQSASPSTR…WSSTLPAGSS (86 aa). The segment covering 430-452 has biased composition (gly residues); that stretch reads RGGGGGRGKGGGAGGGGGGGGAS. A helical; Signal-anchor for type II membrane protein membrane pass occupies residues 477-497; that stretch reads LLGLLLTWLLLLGLLFGLIAL. The Extracellular segment spans residues 498-1470; that stretch reads AEEVRKLKAR…RRKRSIAIKP (973 aa). The residue at position 551 (S551) is a Phosphoserine; by CK2. 5 disordered regions span residues 568–873, 885–999, 1159–1181, 1194–1220, and 1249–1298; these read ENGN…FLSS, GVDL…SSSG, DYRN…NAWS, TAGL…GVSA, and FIVG…TNGG. The triple-helical region stretch occupies residues 574–1456; sequence GSPGPKGDMG…KGEKGDKGDQ (883 aa). Pro residues predominate over residues 597 to 609; the sequence is PGIPGPLGHPGPE. Low complexity-rich tracts occupy residues 742 to 755 and 781 to 803; these read EPGA…AGAD and DPGK…PGRP. The span at 827–848 shows a compositional bias: pro residues; the sequence is PGPPGPPGAMGPPGPPGTPGPA. Positions 850–873 are enriched in low complexity; the sequence is PAGLPGQQGPRGEPGLAGDSFLSS. 6 stretches are compositionally biased toward pro residues: residues 891–914, 940–949, 982–992, 1166–1175, 1201–1215, and 1253–1262; these read PPGP…PRGP, PPGPPGPPGP, PPGPPGPPGPP, PPGPPGPPGM, PGPP…PRGP, and PPGPPGPQGP. N1273 carries N-linked (GlcNAc...) asparagine glycosylation. Residues 1275–1290 are compositionally biased toward low complexity; that stretch reads SSNSSARRGTSYSSST. N-linked (GlcNAc...) asparagine glycosylation occurs at N1395. Positions 1406-1470 are disordered; the sequence is TYGTIPGPPG…RRKRSIAIKP (65 aa). Positions 1434–1443 are enriched in pro residues; the sequence is PRGPPGPPGP. The span at 1446-1455 shows a compositional bias: basic and acidic residues; sequence NKGEKGDKGD. The nonhelical region (NC1) stretch occupies residues 1457–1470; the sequence is VYTGRRKRSIAIKP. Positions 1460 to 1470 are enriched in basic residues; it reads GRRKRSIAIKP.

In terms of assembly, homotrimers of alpha 1(XVII)chains. Interacts (via cytoplasmic region) with ITGB4 (via cytoplasmic region). Interacts (via cytoplasmic region) with DST (via N-terminus). Interacts (via N-terminus) with PLEC. Interacts (via cytoplasmic region) with DSP. In terms of processing, the intracellular/endo domain is disulfide-linked. Post-translationally, prolines at the third position of the tripeptide repeating unit (G-X-Y) are hydroxylated in some or all of the chains. The ectodomain is shedded from the surface of keratinocytes resulting in a 120-kDa soluble form, also named as 120 kDa linear IgA disease antigen homolog. The shedding is mediated by membrane-bound metalloproteases. This cleavage is inhibited by phosphorylation at Ser-551.

It is found in the cell junction. The protein resides in the hemidesmosome. It localises to the membrane. The protein localises to the secreted. Its subcellular location is the extracellular space. It is found in the extracellular matrix. The protein resides in the basement membrane. In terms of biological role, may play a role in the integrity of hemidesmosome and the attachment of basal keratinocytes to the underlying basement membrane. The 120 kDa linear IgA disease antigen homolog is an anchoring filament component involved in dermal-epidermal cohesion. The polypeptide is Collagen alpha-1(XVII) chain (Col17a1) (Mus musculus (Mouse)).